Reading from the N-terminus, the 191-residue chain is Protein Ves (191 aa).

The protein belongs to the Ves family.

The sequence is that of Protein Ves from Shigella flexneri.